Consider the following 152-residue polypeptide: UPF0266 membrane protein YobD (152 aa).

A run of 3 helical transmembrane segments spans residues 6–26, 45–65, and 67–87; these read LVLILFIAALLAFAIYDQFIM, IDSVIFVGLIVILIYNNVTNH, and ALITTWLLSALALMGFYIFWI.

The protein belongs to the UPF0266 family.

The protein resides in the cell inner membrane. The polypeptide is UPF0266 membrane protein YobD (Shigella dysenteriae serotype 1 (strain Sd197)).